Consider the following 541-residue polypeptide: MAKDIKFSADARESMVRGVDILADTVKVTLGPKGRNVVLEKAFGSPLITNDGVTIAKEIELEDHFENMGAKLVSEVASKTNDIAGDGTTTATVLTQAIVREGLKNVTAGANPIGIRRGIEAATTTAVEALKAVAQPVSGKEAIAQVASVSSRSEKVGDYISEAMERVGNDGVITIEESRGMETELEVVEGMQFDRGYLSQYMVTDNEKMVADLENPFILITDKKISNIQDILPLLEEVLKTSRPLLIIADDVDGEALPTLVLNKIRGTFNVVAVKAPGFGDRRKAMLEDIAVLTGGTVITEDLGLELKDATMAALGQAAKVTVDKDNTVIVEGAGSSEAISNRVSLIKSQLETTTSEFDREKLQERLAKLAGGVAVIKVGAATETELKEMKLRIEDALNATRAAVEEGIVAGGGTALINVMDKVAALELDGDAATGRNIVLRALEEPVRQIAYNAGYEGSVIIDKLKNSAAGVGFNAATGEWVDMIATGIIDPVKVTRSALQNAASVAGLILTTEAVVATKPEPAAPAMPQGMDPGMMGGF.

Residues 29–32 (TLGP), 86–90 (DGTTT), glycine 413, 476–478 (NAA), and aspartate 492 contribute to the ATP site.

Belongs to the chaperonin (HSP60) family. As to quaternary structure, forms a cylinder of 14 subunits composed of two heptameric rings stacked back-to-back. Interacts with the co-chaperonin GroES.

It is found in the cytoplasm. It catalyses the reaction ATP + H2O + a folded polypeptide = ADP + phosphate + an unfolded polypeptide.. Functionally, together with its co-chaperonin GroES, plays an essential role in assisting protein folding. The GroEL-GroES system forms a nano-cage that allows encapsulation of the non-native substrate proteins and provides a physical environment optimized to promote and accelerate protein folding. This Streptococcus equi subsp. zooepidemicus (strain MGCS10565) protein is Chaperonin GroEL.